We begin with the raw amino-acid sequence, 534 residues long: CTP synthase (534 aa).

Positions 1–265 (MKYIVVTGGV…TTRLMKHLKL (265 aa)) are amidoligase domain. Residue Ser-12 coordinates CTP. UTP is bound at residue Ser-12. 13–18 (GLGKGI) is a binding site for ATP. Tyr-53 is an L-glutamine binding site. Asp-70 is an ATP binding site. The Mg(2+) site is built by Asp-70 and Glu-140. CTP contacts are provided by residues 147–149 (DIE), 186–191 (KTKPSQ), and Lys-222. UTP contacts are provided by residues 186 to 191 (KTKPSQ) and Lys-222. Residues 289–530 (KLAIVGKYTN…VRAMCKYNKE (242 aa)) form the Glutamine amidotransferase type-1 domain. Position 352 (Gly-352) interacts with L-glutamine. The Nucleophile; for glutamine hydrolysis role is filled by Cys-379. L-glutamine contacts are provided by residues 380 to 383 (LGMQ), Glu-403, and Arg-460. Active-site residues include His-503 and Glu-505.

It belongs to the CTP synthase family. In terms of assembly, homotetramer.

It catalyses the reaction UTP + L-glutamine + ATP + H2O = CTP + L-glutamate + ADP + phosphate + 2 H(+). It carries out the reaction L-glutamine + H2O = L-glutamate + NH4(+). The enzyme catalyses UTP + NH4(+) + ATP = CTP + ADP + phosphate + 2 H(+). It functions in the pathway pyrimidine metabolism; CTP biosynthesis via de novo pathway; CTP from UDP: step 2/2. With respect to regulation, allosterically activated by GTP, when glutamine is the substrate; GTP has no effect on the reaction when ammonia is the substrate. The allosteric effector GTP functions by stabilizing the protein conformation that binds the tetrahedral intermediate(s) formed during glutamine hydrolysis. Inhibited by the product CTP, via allosteric rather than competitive inhibition. In terms of biological role, catalyzes the ATP-dependent amination of UTP to CTP with either L-glutamine or ammonia as the source of nitrogen. Regulates intracellular CTP levels through interactions with the four ribonucleotide triphosphates. The chain is CTP synthase from Methanosarcina acetivorans (strain ATCC 35395 / DSM 2834 / JCM 12185 / C2A).